The chain runs to 491 residues: DEAD-box ATP-dependent RNA helicase 36 (491 aa).

Positions 1-10 are enriched in acidic residues; the sequence is MEEPTPEEEG. The tract at residues 1–56 is disordered; the sequence is MEEPTPEEEGGITIMSKSRKNPKTVVNIQSQKLDSDQNTPQFEKFTNPNPSSDTTS. The segment covering 24-56 has biased composition (polar residues); sequence TVVNIQSQKLDSDQNTPQFEKFTNPNPSSDTTS. A Q motif motif is present at residues 58-86; that stretch reads TNFEGLGLAEWAVETCKELGMRKPTPVQT. The region spanning 89-262 is the Helicase ATP-binding domain; sequence VPKILAGRDV…EHSSNKAYFY (174 aa). An ATP-binding site is contributed by 102–109; the sequence is AQTGSGKT. The short motif at 210–213 is the DEAD box element; that stretch reads DEAD. Residues 289–438 form the Helicase C-terminal domain; that stretch reads YLVHILSQME…NKKVITDSLE (150 aa). The tract at residues 471–491 is disordered; that stretch reads KTLADKGLLKKRGKRQKSTEN. The span at 479-491 shows a compositional bias: basic residues; the sequence is LKKRGKRQKSTEN.

Belongs to the DEAD box helicase family. DDX49/DBP8 subfamily.

The catalysed reaction is ATP + H2O = ADP + phosphate + H(+). In Arabidopsis thaliana (Mouse-ear cress), this protein is DEAD-box ATP-dependent RNA helicase 36 (RH36).